A 692-amino-acid polypeptide reads, in one-letter code: Elongation factor G (692 aa).

In terms of domain architecture, tr-type G spans Glu8–Thr282. GTP is bound by residues Ala17 to Thr24, Asp81 to His85, and Asn135 to Asp138.

This sequence belongs to the TRAFAC class translation factor GTPase superfamily. Classic translation factor GTPase family. EF-G/EF-2 subfamily.

The protein localises to the cytoplasm. Catalyzes the GTP-dependent ribosomal translocation step during translation elongation. During this step, the ribosome changes from the pre-translocational (PRE) to the post-translocational (POST) state as the newly formed A-site-bound peptidyl-tRNA and P-site-bound deacylated tRNA move to the P and E sites, respectively. Catalyzes the coordinated movement of the two tRNA molecules, the mRNA and conformational changes in the ribosome. The chain is Elongation factor G from Desulforamulus reducens (strain ATCC BAA-1160 / DSM 100696 / MI-1) (Desulfotomaculum reducens).